Here is a 380-residue protein sequence, read N- to C-terminus: Tryptophan 2,3-dioxygenase (380 aa).

Residues 57–61 and R128 each bind substrate; that span reads FIITH. H313 serves as a coordination point for heme. A substrate-binding site is contributed by T328.

This sequence belongs to the tryptophan 2,3-dioxygenase family. In terms of assembly, homotetramer. Dimer of dimers. Requires heme as cofactor.

It catalyses the reaction L-tryptophan + O2 = N-formyl-L-kynurenine. The protein operates within amino-acid degradation; L-tryptophan degradation via kynurenine pathway; L-kynurenine from L-tryptophan: step 1/2. Its pathway is pigment biosynthesis; ommochrome biosynthesis. In terms of biological role, heme-dependent dioxygenase that catalyzes the oxidative cleavage of the L-tryptophan (L-Trp) pyrrole ring and converts L-tryptophan to N-formyl-L-kynurenine. Catalyzes the oxidative cleavage of the indole moiety. This is Tryptophan 2,3-dioxygenase from Drosophila mojavensis (Fruit fly).